The sequence spans 335 residues: Protein-arginine N-acetylglucosaminyltransferase SseK3 (335 aa).

UDP-N-acetyl-alpha-D-glucosamine-binding positions include 51-53 and Tyr-75; that span reads QWF. N-beta-linked (GlcNAc) arginine; by autocatalysis glycosylation is found at Arg-153 and Arg-184. Position 224–227 (224–227) interacts with UDP-N-acetyl-alpha-D-glucosamine; it reads YLDA. The DXD motif motif lies at 226–228; sequence DAD. Asp-228 provides a ligand contact to Mn(2+). Glu-258 serves as the catalytic Proton acceptor. A glycan (N-beta-linked (GlcNAc) arginine; by autocatalysis) is linked at Arg-305. Residues Asp-325 and Ser-327 each coordinate Mn(2+). UDP-N-acetyl-alpha-D-glucosamine contacts are provided by residues Ser-327 and 332–335; that span reads SSWR. An N-beta-linked (GlcNAc) arginine; by autocatalysis glycan is attached at Arg-335.

Belongs to the glycosyltransferase NleB family. Interacts with host TRIM32; without mediating its GlcNAcylation. The cofactor is Mn(2+). Auto-glycosylated: arginine GlcNAcylation is required for activity toward death domain-containing host target proteins.

Its subcellular location is the secreted. It localises to the host Golgi apparatus. The enzyme catalyses L-arginyl-[protein] + UDP-N-acetyl-alpha-D-glucosamine = N(omega)-(N-acetyl-beta-D-glucosaminyl)-L-arginyl-[protein] + UDP + H(+). In terms of biological role, protein-arginine N-acetylglucosaminyltransferase effector that disrupts TNF signaling in infected cells, including NF-kappa-B signaling and apoptosis. Acts by catalyzing the transfer of a single N-acetylglucosamine (GlcNAc) to a conserved arginine residue in the death domain of host proteins such as TRADD, TNFRSF1A/TNFR1 and TNFRSF10B/TRAILR2: arginine GlcNAcylation prevents homotypic/heterotypic death domain interactions and assembly of the oligomeric TNF-alpha receptor complex, thereby disrupting TNF signaling. Also acts on host proteins without a death domain: catalyzes arginine GlcNAcylation of host small Rab GTPase (Rab1, Rab5 and Rab11), thereby preventing GTPase activity and leading to impaired host vesicular protein transport. Also mediates auto-GlcNAcylation, which is required for activity toward death domain-containing host target proteins. The chain is Protein-arginine N-acetylglucosaminyltransferase SseK3 from Salmonella typhimurium (strain SL1344).